Reading from the N-terminus, the 488-residue chain is Inosine-5'-monophosphate dehydrogenase (488 aa).

CBS domains lie at 95–153 and 157–216; these read VISN…SIKI and MTKE…AKDE. Residues D250 and 300–302 each bind NAD(+); that span reads GIG. The K(+) site is built by G302 and G304. Position 305 (S305) interacts with IMP. C307 is a binding site for K(+). C307 serves as the catalytic Thioimidate intermediate. IMP-binding positions include 340-342, 363-364, and 387-391; these read DGG, GS, and YRGMG. The active-site Proton acceptor is the R403. Residue E417 participates in IMP binding. A disordered region spans residues 467 to 488; that stretch reads AGLAESHPHDVQITKESPNYSF. K(+) contacts are provided by E471, S472, and H473.

Belongs to the IMPDH/GMPR family. As to quaternary structure, homotetramer. It depends on K(+) as a cofactor.

The enzyme catalyses IMP + NAD(+) + H2O = XMP + NADH + H(+). It participates in purine metabolism; XMP biosynthesis via de novo pathway; XMP from IMP: step 1/1. Its activity is regulated as follows. Mycophenolic acid (MPA) is a non-competitive inhibitor that prevents formation of the closed enzyme conformation by binding to the same site as the amobile flap. In contrast, mizoribine monophosphate (MZP) is a competitive inhibitor that induces the closed conformation. MPA is a potent inhibitor of mammalian IMPDHs but a poor inhibitor of the bacterial enzymes. MZP is a more potent inhibitor of bacterial IMPDH. In terms of biological role, catalyzes the conversion of inosine 5'-phosphate (IMP) to xanthosine 5'-phosphate (XMP), the first committed and rate-limiting step in the de novo synthesis of guanine nucleotides, and therefore plays an important role in the regulation of cell growth. This Staphylococcus saprophyticus subsp. saprophyticus (strain ATCC 15305 / DSM 20229 / NCIMB 8711 / NCTC 7292 / S-41) protein is Inosine-5'-monophosphate dehydrogenase.